We begin with the raw amino-acid sequence, 181 residues long: UPF0302 protein lin2035 (181 aa).

This sequence belongs to the UPF0302 family.

The chain is UPF0302 protein lin2035 from Listeria innocua serovar 6a (strain ATCC BAA-680 / CLIP 11262).